The following is a 419-amino-acid chain: Keratin, type I cytoskeletal 47 kDa (419 aa).

Positions 1–81 (MSFRSSSSYS…SSSFSNFGGN (81 aa)) are head. The tract at residues 82–117 (DKQTMQNLNDRLASYLEKVRALEAANADLELKIREW) is coil 1A. The IF rod domain maps to 82-397 (DKQTMQNLND…RLLEGEFGSL (316 aa)). The interval 118-139 (YEKQKGSGIGAGSKDFSKYFEI) is linker 1. The interval 140–231 (ISDLRNKILS…KNHEEEMSIA (92 aa)) is coil 1B. Positions 232-254 (KSSSAGQVNVEMDAAPGIDLNKI) are linker 12. The interval 255 to 393 (LSDMRADYET…ETYRRLLEGE (139 aa)) is coil 2. Positions 394–419 (FGSLKSSIVQATEVSTSQSSSSSKKD) are tail.

This sequence belongs to the intermediate filament family. Heterotetramer of two type I and two type II keratins.

This chain is Keratin, type I cytoskeletal 47 kDa (xk81b2), found in Xenopus laevis (African clawed frog).